A 441-amino-acid polypeptide reads, in one-letter code: Glutamate--tRNA ligase 2 (441 aa).

A 'HIGH' region motif is present at residues 8 to 18; sequence PSPTGYIHVGN. The 'KMSKS' region signature appears at 239-243; that stretch reads ALSKR. Position 242 (Lys242) interacts with ATP.

The protein belongs to the class-I aminoacyl-tRNA synthetase family. Glutamate--tRNA ligase type 1 subfamily. Monomer.

Its subcellular location is the cytoplasm. It carries out the reaction tRNA(Glu) + L-glutamate + ATP = L-glutamyl-tRNA(Glu) + AMP + diphosphate. Catalyzes the attachment of glutamate to tRNA(Glu) in a two-step reaction: glutamate is first activated by ATP to form Glu-AMP and then transferred to the acceptor end of tRNA(Glu). This chain is Glutamate--tRNA ligase 2, found in Ruegeria sp. (strain TM1040) (Silicibacter sp.).